The sequence spans 58 residues: Small ribosomal subunit protein bS21 (58 aa).

The disordered stretch occupies residues 36 to 58; it reads EHYEKPSVKRKKKSEAARKRKFK. The segment covering 43 to 58 has biased composition (basic residues); it reads VKRKKKSEAARKRKFK.

It belongs to the bacterial ribosomal protein bS21 family.

The chain is Small ribosomal subunit protein bS21 from Clostridium kluyveri (strain NBRC 12016).